Consider the following 253-residue polypeptide: uncharacterized protein (253 aa).

The next 6 helical transmembrane spans lie at 17 to 37, 46 to 66, 93 to 113, 139 to 159, 172 to 192, and 222 to 242; these read MWLL…HIIA, IFGF…VFVF, LAAS…YGIW, MYGL…WTVF, AMVL…SPLV, and IHLS…LLIM.

The protein localises to the cell membrane. This is an uncharacterized protein from Bacillus subtilis (strain 168).